The chain runs to 415 residues: U-box domain-containing protein 29 (415 aa).

The U-box domain maps to 11-85 (TVPSFFKCPI…NIWSDSIGRR (75 aa)). 2 ARM repeats span residues 221-263 (KSKL…TISK) and 265-307 (KRVR…TLSS).

Binds to SD129 and SD25.

It carries out the reaction S-ubiquitinyl-[E2 ubiquitin-conjugating enzyme]-L-cysteine + [acceptor protein]-L-lysine = [E2 ubiquitin-conjugating enzyme]-L-cysteine + N(6)-ubiquitinyl-[acceptor protein]-L-lysine.. Its pathway is protein modification; protein ubiquitination. Functionally, functions as an E3 ubiquitin ligase. This is U-box domain-containing protein 29 (PUB29) from Arabidopsis thaliana (Mouse-ear cress).